We begin with the raw amino-acid sequence, 113 residues long: Transmembrane protein 256 (113 aa).

A signal peptide spans 1 to 29; it reads MAGPAAAFRRLGALSGAAALGFASYGAHG. The Extracellular segment spans residues 30-63; that stretch reads AQFPDAYGKELFDKANKHHFLHSLALLGVPHCRK. Position 43 is an N6-acetyllysine (Lys43). A helical transmembrane segment spans residues 64 to 84; it reads PLWAGLLLASGTTLFCTSFYY. Residues 85–92 lie on the Cytoplasmic side of the membrane; it reads QALSGDPS. Residues 93–113 traverse the membrane as a helical segment; the sequence is IQTLAPAGGTLLLLGWLALAL.

This sequence belongs to the TMEM256 family.

The protein resides in the membrane. In Homo sapiens (Human), this protein is Transmembrane protein 256 (TMEM256).